A 473-amino-acid chain; its full sequence is Photosystem II CP43 reaction center protein (473 aa).

Positions 1–14 (MKTLYSRRRFYHVE) are excised as a propeptide. Position 15 is an N-acetylthreonine (threonine 15). At threonine 15 the chain carries Phosphothreonine. 5 helical membrane-spanning segments follow: residues 69–93 (LFEV…PHLA), 134–155 (LLGP…KDRN), 178–200 (KALY…RKIT), 255–275 (KPFA…LSYS), and 291–312 (WFNN…ASQA). Glutamate 367 contacts [CaMn4O5] cluster. Residues 447 to 471 (RARAAAAGFEKGIDRDFEPVLSMTP) form a helical membrane-spanning segment.

This sequence belongs to the PsbB/PsbC family. PsbC subfamily. PSII is composed of 1 copy each of membrane proteins PsbA, PsbB, PsbC, PsbD, PsbE, PsbF, PsbH, PsbI, PsbJ, PsbK, PsbL, PsbM, PsbT, PsbX, PsbY, PsbZ, Psb30/Ycf12, at least 3 peripheral proteins of the oxygen-evolving complex and a large number of cofactors. It forms dimeric complexes. It depends on Binds multiple chlorophylls and provides some of the ligands for the Ca-4Mn-5O cluster of the oxygen-evolving complex. It may also provide a ligand for a Cl- that is required for oxygen evolution. PSII binds additional chlorophylls, carotenoids and specific lipids. as a cofactor.

It is found in the plastid. Its subcellular location is the chloroplast thylakoid membrane. In terms of biological role, one of the components of the core complex of photosystem II (PSII). It binds chlorophyll and helps catalyze the primary light-induced photochemical processes of PSII. PSII is a light-driven water:plastoquinone oxidoreductase, using light energy to abstract electrons from H(2)O, generating O(2) and a proton gradient subsequently used for ATP formation. The polypeptide is Photosystem II CP43 reaction center protein (Solanum bulbocastanum (Wild potato)).